A 594-amino-acid chain; its full sequence is Putative lipase ATG15-1 (594 aa).

Residues 1–12 lie on the Cytoplasmic side of the membrane; the sequence is MRRRPLCTSASR. A helical; Signal-anchor for type II membrane protein transmembrane segment spans residues 13 to 33; sequence VTASLLLSFLAVSSAAELPIL. The Lumenal portion of the chain corresponds to 34 to 594; sequence PAPPISPQPH…ANHFVYVLHA (561 aa). Residues asparagine 144, asparagine 179, asparagine 201, asparagine 259, and asparagine 283 are each glycosylated (N-linked (GlcNAc...) asparagine). The active-site Charge relay system is serine 299. N-linked (GlcNAc...) asparagine glycosylation is found at asparagine 432 and asparagine 445. Residues 447-469 are compositionally biased toward low complexity; it reads TETTTTSTSKPTSTSKSSKSNTR. Disordered regions lie at residues 447-473 and 489-509; these read TETT…TRTE and TGTQ…TSTC. Residues asparagine 576 and asparagine 582 are each glycosylated (N-linked (GlcNAc...) asparagine).

The protein belongs to the AB hydrolase superfamily. Lipase family. Binds to both phosphatidylinositol (PI) and phosphatidylinositol 3,5-bisphosphate (PIP2).

It localises to the endosome. Its subcellular location is the multivesicular body membrane. The protein localises to the prevacuolar compartment membrane. The enzyme catalyses a triacylglycerol + H2O = a diacylglycerol + a fatty acid + H(+). Lipase which is essential for lysis of subvacuolar cytoplasm to vacuole targeted bodies and intravacuolar autophagic bodies. Involved in the lysis of intravacuolar multivesicular body (MVB) vesicles. The intravacuolar membrane disintegration by ATG15 is critical to life span extension. The sequence is that of Putative lipase ATG15-1 (ATG15-1) from Phaeosphaeria nodorum (strain SN15 / ATCC MYA-4574 / FGSC 10173) (Glume blotch fungus).